An 86-amino-acid chain; its full sequence is Muscarinic toxin 38 (86 aa).

A signal peptide spans 1-21 (MKTLLLTLVVVTIVCLDLGYT). 4 cysteine pairs are disulfide-bonded: cysteine 24–cysteine 45, cysteine 38–cysteine 63, cysteine 67–cysteine 78, and cysteine 79–cysteine 84.

It belongs to the three-finger toxin family. Short-chain subfamily. Aminergic toxin sub-subfamily. In terms of assembly, monomer. Expressed by the venom gland.

The protein resides in the secreted. Binds to the muscarinic acetylcholine receptor (CHRM). In Ophiophagus hannah (King cobra), this protein is Muscarinic toxin 38.